A 61-amino-acid chain; its full sequence is MDPNCSCAAGGSCTCAGSCKCKECKCTSCKKSCCSCCPPGCTKCAQGCVCKGASDKCNCCA.

N-acetylmethionine is present on Met-1. Residues 1 to 29 (MDPNCSCAAGGSCTCAGSCKCKECKCTSC) are beta. A divalent metal cation contacts are provided by Cys-5, Cys-7, Cys-13, Cys-15, Cys-19, Cys-21, Cys-24, Cys-26, Cys-29, Cys-33, Cys-34, Cys-36, Cys-37, Cys-41, Cys-44, Cys-48, Cys-50, Cys-57, Cys-59, and Cys-60. The tract at residues 30–61 (KKSCCSCCPPGCTKCAQGCVCKGASDKCNCCA) is alpha.

The protein belongs to the metallothionein superfamily. Type 1 family. As to quaternary structure, monomer.

Metallothioneins have a high content of cysteine residues that bind various heavy metals. This chain is Metallothionein, found in Balaena mysticetus (Bowhead whale).